The sequence spans 793 residues: MADAWEEIRRLAADFQRAQFAESTQRLSERNCIEIVNKLISQKQLEVVHTLDGKEYITPAQISKEMRDELHVRGGRVNIVDLQQVINVDLTHIENRVGDIIKSEKHVQMVLGQLVDENYLDRLSEEVNDKLQESGQVTVSELCKTYDLPGDFLTQALTQRLGRIINGHLDLDNRGVIFTEAFVARHKARIRGLFSAITRPTAVNSLVSKYGFQEQLLYSVLEELVSTGRLRGTVVGGRQDKAVFVPDIYSRTQSTWVDSFFRQNGYLEFDALSRLGIPDAVNYIKKRYKNTPLLFLKATCVGQGLVDQVEASVEEAISSGTWVDVSPLLPSSLSVEDAAMLLQQVMRPFGKHASATVFSDTVVVSEKFINDCTKLFSERMHQKAEKEMKNNPVHLITEEDLKQISILESVNTNKKDKKDERRKKATEGSGSVRGGGGGNAREYKIKKVKKKGRKDEDSDDESQSSHAGKKKPDITFMFQDEIEGCLRKHIPDAPEEFISELAEHLIKPLNKMYLEVVRSVFMSSTSASGTGRKRTIKDLQEEVSNLYNNIRLFEKGMKYFADDTQTALTKHLLKTVCTDITNLMFNFLASDLMMAVEDPATITSDMRKKILSKLTEETKVALTKLHNSLNEKSIEDFLSCLDSATEACDIMVKKGDKKRERQILFQHRQALADQLKVTEDPALILHLTSVLLFQFSTHSMLHAPGRCVPQIIAFLHNKIPEDQHTLLVKYQGLVVKQLVSQNKKSGQGEDPSSDDLDKEQHDVTNTTRKELQELSLSIKDLVLKPRKSSVTEE.

Ala-2 is modified (N-acetylalanine). Positions 2–200 are mediates interaction with DDRGK1; that stretch reads ADAWEEIRRL…RGLFSAITRP (199 aa). Positions 2–212 are required for E3 UFM1-protein ligase activity; the sequence is ADAWEEIRRL…VNSLVSKYGF (211 aa). An involved in CDK5RAP3-binding region spans residues 121–250; the sequence is DRLSEEVNDK…KAVFVPDIYS (130 aa). Residues 200-400 are mediates interaction with TRIP4; that stretch reads PTAVNSLVSK…NPVHLITEED (201 aa). The segment at 410 to 473 is disordered; the sequence is VNTNKKDKKD…SSHAGKKKPD (64 aa). An Omega-N-methylarginine modification is found at Arg-433. Phosphoserine is present on residues Ser-458 and Ser-462. Residues 490–683 are mediates interaction with CDK5RAP3; the sequence is IPDAPEEFIS…QLKVTEDPAL (194 aa). Thr-535 bears the Phosphothreonine mark. Positions 742-769 are disordered; sequence NKKSGQGEDPSSDDLDKEQHDVTNTTRK. Ser-752 and Ser-753 each carry phosphoserine. The segment covering 758–769 has biased composition (basic and acidic residues); it reads KEQHDVTNTTRK.

It belongs to the UFL1 family. In terms of assembly, catalytic component of the UFM1 ribosome E3 ligase (UREL) complex, composed of UFL1, DDRGK1 and CDK5RAP3. Interacts with E2-like enzyme UFC1. Interacts with RELA. Interacts with NBN; promoting recruitment to double-strand breaks following DNA damage. Interacts (when phosphorylated) with YWHAG/14-3-3-gamma; sequestering UFL1 and preventing its association with PDCD1/PD-1 substrate. Ubiquitinated, leading to its degradation by the proteasome. Interaction with CDK5RAP3 protects both proteins against ubiquitination and degradation via the proteasome. Post-translationally, phosphorylated at Ser-462 by ATM, enhancing protein ligase activity and promoting ATM activation in a positive feedback loop. Phosphorylation at Thr-535 by AMPK promotes its interaction with YWHAG/14-3-3-gamma, thereby preventing UFL1 association with PDCD1/PD-1 substrate. As to expression, ubiquitously expressed with expression detected in brain, skeletal muscle, lung, heart, gall bladder, liver, small intestine, pancreas, spleen and kidney (at protein level). At 8 weeks after birth, high expression in the Purkinje cell layer of the cerebellum.

It is found in the endoplasmic reticulum membrane. The protein localises to the cytoplasm. It localises to the cytosol. Its subcellular location is the nucleus. The protein resides in the chromosome. In terms of biological role, E3 protein ligase that mediates ufmylation, the covalent attachment of the ubiquitin-like modifier UFM1 to lysine residues on target proteins, and which plays a key role in various processes, such as ribosome recycling, response to DNA damage, interferon response or reticulophagy (also called ER-phagy). Catalyzes ufmylation of many protein, such as CD274/PD-L1, CDK5RAP3, CYB5R3, DDRGK1, EIF6, histone H4, MRE11, P4HB, PDCD1/PD-1, TRIP4, RPN1, RPS20/uS10, RPL10/uL16, RPL26/uL24, SYVN1/HRD1 and TP53/p53. As part of the UREL complex, plays a key role in ribosome recycling by catalyzing mono-ufmylation of RPL26/uL24 subunit of the 60S ribosome. Ufmylation of RPL26/uL24 occurs on free 60S ribosomes following ribosome dissociation: it weakens the junction between post-termination 60S subunits and SEC61 translocons, promoting release and recycling of the large ribosomal subunit from the endoplasmic reticulum membrane. Ufmylation of RPL26/uL24 and subsequent 60S ribosome recycling either take place after normal termination of translation or after ribosome stalling during cotranslational translocation at the endoplasmic reticulum. Involved in reticulophagy in response to endoplasmic reticulum stress by mediating ufmylation of proteins such as CYB5R3 and RPN1, thereby promoting lysosomal degradation of ufmylated proteins. Ufmylation in response to endoplasmic reticulum stress is essential for processes such as hematopoiesis, blood vessel morphogenesis or inflammatory response. Mediates ufmylation of DDRGK1 and CDK5RAP3; the role of these modifications is however unclear: as both DDRGK1 and CDK5RAP3 act as substrate adapters for ufmylation, it is uncertain whether ufmylation of these proteins is, a collateral effect or is required for ufmylation. Acts as a negative regulator of T-cell activation by mediating ufmylation and stabilization of PDCD1/PD-1. Also involved in the response to DNA damage: recruited to double-strand break sites following DNA damage and mediates monoufmylation of histone H4 and ufmylation of MRE11. Mediates ufmylation of TP53/p53, promoting its stability. Catalyzes ufmylation of TRIP4, thereby playing a role in nuclear receptor-mediated transcription. Required for hematopoietic stem cell function and hematopoiesis. The sequence is that of E3 UFM1-protein ligase 1 from Rattus norvegicus (Rat).